We begin with the raw amino-acid sequence, 27 residues long: Trypsin inhibitor 5 (27 aa).

3 cysteine pairs are disulfide-bonded: cysteine 1–cysteine 18, cysteine 8–cysteine 20, and cysteine 14–cysteine 26.

It is found in the secreted. Inhibits trypsin. This is Trypsin inhibitor 5 from Sechium edule (Chayote).